The sequence spans 210 residues: 3-hexulose-6-phosphate synthase (210 aa).

The protein belongs to the HPS/KGPDC family. HPS subfamily.

The catalysed reaction is D-ribulose 5-phosphate + formaldehyde = D-arabino-hex-3-ulose 6-phosphate. The protein operates within one-carbon metabolism; formaldehyde assimilation via RuMP pathway; D-fructose 6-phosphate from D-ribulose 5-phosphate and formaldehyde: step 1/2. Catalyzes the condensation of ribulose 5-phosphate with formaldehyde to form 3-hexulose 6-phosphate. The sequence is that of 3-hexulose-6-phosphate synthase from Staphylococcus aureus (strain MRSA252).